An 88-amino-acid chain; its full sequence is Small ribosomal subunit protein bS20 (88 aa).

The disordered stretch occupies residues 1 to 27 (MANSKSAKKRALQSEKRRQHNASRRSM).

This sequence belongs to the bacterial ribosomal protein bS20 family.

Its function is as follows. Binds directly to 16S ribosomal RNA. This is Small ribosomal subunit protein bS20 from Shewanella sp. (strain ANA-3).